A 544-amino-acid chain; its full sequence is Membrane protein insertase YidC (544 aa).

The next 5 membrane-spanning stretches (helical) occupy residues 6-26 (NILL…WQTD), 345-365 (LLMF…LITL), 423-443 (GGCL…WVLL), 460-480 (LSVQ…MFVM), and 503-523 (VVFT…WLVG).

Belongs to the OXA1/ALB3/YidC family. Type 1 subfamily. In terms of assembly, interacts with the Sec translocase complex via SecD. Specifically interacts with transmembrane segments of nascent integral membrane proteins during membrane integration.

Its subcellular location is the cell inner membrane. Functionally, required for the insertion and/or proper folding and/or complex formation of integral membrane proteins into the membrane. Involved in integration of membrane proteins that insert both dependently and independently of the Sec translocase complex, as well as at least some lipoproteins. Aids folding of multispanning membrane proteins. This Shewanella woodyi (strain ATCC 51908 / MS32) protein is Membrane protein insertase YidC.